We begin with the raw amino-acid sequence, 232 residues long: Small ribosomal subunit protein uS2 (232 aa).

The protein belongs to the universal ribosomal protein uS2 family.

This Pelotomaculum thermopropionicum (strain DSM 13744 / JCM 10971 / SI) protein is Small ribosomal subunit protein uS2.